A 653-amino-acid chain; its full sequence is 2-oxoglutarate oxidoreductase subunit KorA (653 aa).

Residues 1 to 21 (MDPNGSGAGPESHDAAFHAAP) form a disordered region. The span at 11-21 (ESHDAAFHAAP) shows a compositional bias: basic and acidic residues.

KG oxidoreductase (KOR) is composed of KorA and KorB subunits.

It catalyses the reaction 2 oxidized [2Fe-2S]-[ferredoxin] + 2-oxoglutarate + CoA = succinyl-CoA + 2 reduced [2Fe-2S]-[ferredoxin] + CO2 + H(+). It participates in carbohydrate metabolism; tricarboxylic acid cycle. Its function is as follows. Component of KG oxidoreductase (KOR) that catalyzes the CoA-dependent oxidative decarboxylation of 2-oxoglutarate (alpha-ketoglutarate, KG) to succinyl-CoA. Methyl viologen can act as electron acceptor in vitro; the physiologic electron acceptor is unknown. Is involved in the alternative TCA pathway that functions concurrently with fatty acid beta-oxidation. Since a growing body of evidence indicates that lipids (for example cholesterol and fatty acids) are a predominant growth substrate for M.tuberculosis during infection, flux through KOR likely represents an important step in intermediary metabolism in vivo. KOR-dependent decarboxylation of KG also appears to be an important source of CO(2) in M.tuberculosis metabolism. In Mycobacterium tuberculosis (strain ATCC 25618 / H37Rv), this protein is 2-oxoglutarate oxidoreductase subunit KorA (korA).